Reading from the N-terminus, the 424-residue chain is Acetyl-CoA acetyltransferase, mitochondrial (424 aa).

The N-terminal 30 residues, 1 to 30 (MAALVALHGVVRRPLLRGLLQEVRCLERSY), are a transit peptide targeting the mitochondrion. Position 63 is an N6-acetyllysine; alternate (Lys-63). Lys-63 bears the N6-succinyllysine; alternate mark. Lys-75 carries the post-translational modification N6-succinyllysine. Cys-123 serves as the catalytic Acyl-thioester intermediate. N6-acetyllysine; alternate occurs at positions 171, 178, 187, and 199. Lys-171, Lys-178, Lys-187, and Lys-199 each carry N6-succinyllysine; alternate. Ser-204 bears the Phosphoserine mark. CoA is bound at residue Tyr-216. A K(+)-binding site is contributed by Tyr-216. An N6-acetyllysine; alternate mark is found at Lys-220 and Lys-227. Lys-220 and Lys-227 each carry N6-succinyllysine; alternate. Lys-240 bears the N6-succinyllysine mark. Lys-242 carries the N6-acetyllysine; alternate modification. Lys-242 bears the N6-succinyllysine; alternate mark. 2 positions are modified to N6-acetyllysine: Lys-248 and Lys-254. CoA is bound by residues 255–257 (RVD) and Lys-260. N6-acetyllysine; alternate is present on Lys-260. An N6-succinyllysine; alternate modification is found at Lys-260. An N6-succinyllysine mark is found at Lys-263 and Lys-265. Residue Lys-270 is modified to N6-acetyllysine. Residues Ala-277, Ala-278, and Ala-280 each contribute to the K(+) site. Ser-281 contributes to the CoA binding site. Lys-335 carries the post-translational modification N6-acetyllysine. Val-378 contributes to the K(+) binding site. Cys-410 serves as the catalytic Proton donor/acceptor.

Belongs to the thiolase-like superfamily. Thiolase family. Homotetramer. In terms of processing, succinylation at Lys-265, adjacent to a coenzyme A binding site. Desuccinylated by SIRT5.

The protein localises to the mitochondrion. The enzyme catalyses 2 acetyl-CoA = acetoacetyl-CoA + CoA. The catalysed reaction is propanoyl-CoA + acetyl-CoA = 2-methyl-3-oxobutanoyl-CoA + CoA. It participates in lipid metabolism; fatty acid beta-oxidation. With respect to regulation, activated by potassium ions, but not sodium ions. Functionally, this is one of the enzymes that catalyzes the last step of the mitochondrial beta-oxidation pathway, an aerobic process breaking down fatty acids into acetyl-CoA. Using free coenzyme A/CoA, catalyzes the thiolytic cleavage of medium- to long-chain 3-oxoacyl-CoAs into acetyl-CoA and a fatty acyl-CoA shortened by two carbon atoms. The activity of the enzyme is reversible and it can also catalyze the condensation of two acetyl-CoA molecules into acetoacetyl-CoA. Thereby, it plays a major role in ketone body metabolism. The polypeptide is Acetyl-CoA acetyltransferase, mitochondrial (Acat1) (Mus musculus (Mouse)).